Consider the following 172-residue polypeptide: uncharacterized protein (172 aa).

This sequence belongs to the flavoredoxin family. The cofactor is FMN.

This is an uncharacterized protein from Pyrococcus horikoshii (strain ATCC 700860 / DSM 12428 / JCM 9974 / NBRC 100139 / OT-3).